A 202-amino-acid chain; its full sequence is MLPALETTLPLLLFWGGIGYLLGSVPFGMVITRAFGLGNLREIGSGNIGTTNVLRTGSKAAAAATLLLDGGKGAAAVLLARALAGEDAAQLAGLLAFLGHCFPVWLGFKGGKGVATFLGLMLALAWPVGIACCLTWLGVAVLRRISSLAALCAAVAAPVWCLLLGAPQAAVLSALLALVILWRHRENIARLRAGTEPKIGQK.

The next 5 membrane-spanning stretches (helical) occupy residues 11–31, 60–80, 88–108, 117–137, and 162–182; these read LLLFWGGIGYLLGSVPFGMVI, AAAAATLLLDGGKGAAAVLLA, AAQLAGLLAFLGHCFPVWLGF, FLGLMLALAWPVGIACCLTWL, and LLLGAPQAAVLSALLALVILW.

The protein belongs to the PlsY family. As to quaternary structure, probably interacts with PlsX.

It localises to the cell inner membrane. The enzyme catalyses an acyl phosphate + sn-glycerol 3-phosphate = a 1-acyl-sn-glycero-3-phosphate + phosphate. It participates in lipid metabolism; phospholipid metabolism. Catalyzes the transfer of an acyl group from acyl-phosphate (acyl-PO(4)) to glycerol-3-phosphate (G3P) to form lysophosphatidic acid (LPA). This enzyme utilizes acyl-phosphate as fatty acyl donor, but not acyl-CoA or acyl-ACP. The sequence is that of Glycerol-3-phosphate acyltransferase from Ruegeria sp. (strain TM1040) (Silicibacter sp.).